We begin with the raw amino-acid sequence, 152 residues long: Siroheme decarboxylase beta subunit (152 aa).

This sequence belongs to the Ahb/Nir family. As to quaternary structure, forms a heterodimer composed of AhbA and AhbB.

The catalysed reaction is siroheme + 2 H(+) = 12,18-didecarboxysiroheme + 2 CO2. The protein operates within porphyrin-containing compound metabolism; protoheme biosynthesis. With respect to regulation, binds heme b. The redox state of the heme b modulates the activity of the enzyme. Activity is stimulated by sodium dithionite. Functionally, involved in siroheme-dependent heme b biosynthesis. Catalyzes the decarboxylation of siroheme into didecarboxysiroheme. The chain is Siroheme decarboxylase beta subunit from Methanosarcina barkeri (strain Fusaro / DSM 804).